The following is a 380-amino-acid chain: Polygalacturonase 2 (380 aa).

The first 20 residues, 1-20, serve as a signal peptide directing secretion; sequence MIAGSKLLMLGLFGALAVHA. Positions 21–38 are excised as a propeptide; sequence LPEPAKAQVTAAPKLEER. Cysteine 42 and cysteine 60 form a disulfide bridge. 2 PbH1 repeats span residues 173 to 204 and 205 to 226; these read ATDL…DVGS and STGI…AVNS. The Proton donor role is filled by aspartate 219. Cysteine 221 and cysteine 237 form a disulfide bridge. Residue histidine 241 is part of the active site. PbH1 repeat units follow at residues 256–277, 285–307, and 319–364; these read VANV…RIKT, VKNV…VIEQ, and TDGV…SVSG. Asparagine 287 is a glycosylation site (N-linked (GlcNAc...) asparagine). 2 disulfide bridges follow: cysteine 347–cysteine 352 and cysteine 371–cysteine 380.

Belongs to the glycosyl hydrolase 28 family.

It localises to the secreted. The enzyme catalyses (1,4-alpha-D-galacturonosyl)n+m + H2O = (1,4-alpha-D-galacturonosyl)n + (1,4-alpha-D-galacturonosyl)m.. This chain is Polygalacturonase 2 (PG2), found in Penicillium olsonii.